The chain runs to 709 residues: ATP-dependent zinc metalloprotease YME1 homolog (709 aa).

Residues 152 to 182 (FTSDTSSTVSSTPSLNHSLQNSMPPSTPTPP) form a disordered region. A compositionally biased stretch (low complexity) spans 153 to 165 (TSDTSSTVSSTPS). A helical transmembrane segment spans residues 217–239 (IFKFIAGLSVASYFVLLGMSIFA). Position 307-314 (307-314 (GPPGTGKT)) interacts with ATP. Residue histidine 530 coordinates Zn(2+). Glutamate 531 is an active-site residue. Residues histidine 534 and aspartate 608 each coordinate Zn(2+).

This sequence in the N-terminal section; belongs to the AAA ATPase family. In the C-terminal section; belongs to the peptidase M41 family. It depends on Zn(2+) as a cofactor.

It is found in the mitochondrion membrane. Functionally, putative ATP-dependent protease. The sequence is that of ATP-dependent zinc metalloprotease YME1 homolog from Schizosaccharomyces pombe (strain 972 / ATCC 24843) (Fission yeast).